A 283-amino-acid chain; its full sequence is 4-hydroxy-3-methylbut-2-enyl diphosphate reductase (283 aa).

Position 12 (Cys12) interacts with [4Fe-4S] cluster. The (2E)-4-hydroxy-3-methylbut-2-enyl diphosphate site is built by His40 and His72. Dimethylallyl diphosphate is bound by residues His40 and His72. Residues His40 and His72 each contribute to the isopentenyl diphosphate site. Position 94 (Cys94) interacts with [4Fe-4S] cluster. Position 122 (His122) interacts with (2E)-4-hydroxy-3-methylbut-2-enyl diphosphate. His122 lines the dimethylallyl diphosphate pocket. Residue His122 participates in isopentenyl diphosphate binding. The Proton donor role is filled by Glu124. A (2E)-4-hydroxy-3-methylbut-2-enyl diphosphate-binding site is contributed by Thr160. Cys188 contacts [4Fe-4S] cluster. (2E)-4-hydroxy-3-methylbut-2-enyl diphosphate contacts are provided by Ser216, Asn218, and Ser259. Dimethylallyl diphosphate is bound by residues Ser216, Asn218, and Ser259. Isopentenyl diphosphate is bound by residues Ser216, Asn218, and Ser259.

It belongs to the IspH family. It depends on [4Fe-4S] cluster as a cofactor.

It carries out the reaction isopentenyl diphosphate + 2 oxidized [2Fe-2S]-[ferredoxin] + H2O = (2E)-4-hydroxy-3-methylbut-2-enyl diphosphate + 2 reduced [2Fe-2S]-[ferredoxin] + 2 H(+). The catalysed reaction is dimethylallyl diphosphate + 2 oxidized [2Fe-2S]-[ferredoxin] + H2O = (2E)-4-hydroxy-3-methylbut-2-enyl diphosphate + 2 reduced [2Fe-2S]-[ferredoxin] + 2 H(+). Its pathway is isoprenoid biosynthesis; dimethylallyl diphosphate biosynthesis; dimethylallyl diphosphate from (2E)-4-hydroxy-3-methylbutenyl diphosphate: step 1/1. The protein operates within isoprenoid biosynthesis; isopentenyl diphosphate biosynthesis via DXP pathway; isopentenyl diphosphate from 1-deoxy-D-xylulose 5-phosphate: step 6/6. Catalyzes the conversion of 1-hydroxy-2-methyl-2-(E)-butenyl 4-diphosphate (HMBPP) into a mixture of isopentenyl diphosphate (IPP) and dimethylallyl diphosphate (DMAPP). Acts in the terminal step of the DOXP/MEP pathway for isoprenoid precursor biosynthesis. The sequence is that of 4-hydroxy-3-methylbut-2-enyl diphosphate reductase from Dictyoglomus thermophilum (strain ATCC 35947 / DSM 3960 / H-6-12).